The sequence spans 791 residues: Lon protease (791 aa).

Residues 28–223 (LPVVVISEIM…YILQDIQSLL (196 aa)) form the Lon N-terminal domain. 374-381 (GPPGVGKT) is a binding site for ATP. One can recognise a Lon proteolytic domain in the interval 610–791 (KEKIGSTNGL…SDVFSQVFVV (182 aa)). Active-site residues include Ser-697 and Lys-740.

It belongs to the peptidase S16 family. As to quaternary structure, homohexamer. Organized in a ring with a central cavity.

The protein resides in the cytoplasm. It catalyses the reaction Hydrolysis of proteins in presence of ATP.. Its function is as follows. ATP-dependent serine protease that mediates the selective degradation of mutant and abnormal proteins as well as certain short-lived regulatory proteins. Required for cellular homeostasis and for survival from DNA damage and developmental changes induced by stress. Degrades polypeptides processively to yield small peptide fragments that are 5 to 10 amino acids long. Binds to DNA in a double-stranded, site-specific manner. The polypeptide is Lon protease (Aster yellows witches'-broom phytoplasma (strain AYWB)).